A 357-amino-acid polypeptide reads, in one-letter code: MPYIGSLKVNQFRNLADVDITPHSQFNFFFGQNGAGKTSILESIYYLSVGRSFRTHLPQRLIQDNTDRFLIFITLYNGTQFIPLGVERDCQGDRCLRINGETASSWSLAAKRLPLCSLSAMSHRFLLDGPRVRRQFLDWLMFHVEPSFFSIWQRLQRSLKQRNASLKAKLPLGEITHWDKMLVEDGERLHQLRQNIVTEFKPLFTQMLQQFLPAYPLIGHYFRGWSEKYSLMEQLQINLKQDLQRGYTQAGPQRADFRLTLRDLPAQDILSQGQQKLVTYALHFAQGLLLKEKTGISPIYLIDDLPAELDANKRDCVIDLVNCLESQVFISGIDPNEIRLPPHSTLFHVKHGKVAAL.

Residue 31-38 coordinates ATP; that stretch reads GQNGAGKT.

This sequence belongs to the RecF family.

Its subcellular location is the cytoplasm. Its function is as follows. The RecF protein is involved in DNA metabolism; it is required for DNA replication and normal SOS inducibility. RecF binds preferentially to single-stranded, linear DNA. It also seems to bind ATP. This is DNA replication and repair protein RecF from Coxiella burnetii (strain CbuK_Q154) (Coxiella burnetii (strain Q154)).